The primary structure comprises 392 residues: MIIPSLLDTDLYKFTMMQVVLHQFPQAQVEYRFKCRNAGVDLTPYIDEIRAEVAHLCQLRFTDDELAYLRGLRFIKSDFVDFLGLFHLNEKYVSVRPSPQGNGEIEISIIGPWLHTILFEVPVLAIVNEVYFRRTQPRPDLAEGRRRLDQKLALLKTPELADCVIADYGTRRRFSREWQEEVLLTMRRLLGPQLAGTSNVHFARLHNMVPLGTMAHEYLQACQALGPRLRDSQVYALERWAREYRGDLGIALSDTYGFDAFLRDFDLYFCKLFDGVRHDSGDPMLWGERMVAHYAANRVDPRTKTLIFSDSLDIPRVIELYERFHGRCRLAFGVGTNLTNDLGYTPLQIVIKMVRCNGQPVAKLSDTPEKTMCDDPGYLSYLRQVYSVQPAA.

A Phosphohistidine; by autocatalysis modification is found at H216.

The protein belongs to the NAPRTase family. Transiently phosphorylated on a His residue during the reaction cycle. Phosphorylation strongly increases the affinity for substrates and increases the rate of nicotinate D-ribonucleotide production. Dephosphorylation regenerates the low-affinity form of the enzyme, leading to product release.

It carries out the reaction nicotinate + 5-phospho-alpha-D-ribose 1-diphosphate + ATP + H2O = nicotinate beta-D-ribonucleotide + ADP + phosphate + diphosphate. It functions in the pathway cofactor biosynthesis; NAD(+) biosynthesis; nicotinate D-ribonucleotide from nicotinate: step 1/1. In terms of biological role, catalyzes the synthesis of beta-nicotinate D-ribonucleotide from nicotinate and 5-phospho-D-ribose 1-phosphate at the expense of ATP. The chain is Nicotinate phosphoribosyltransferase from Cupriavidus necator (strain ATCC 17699 / DSM 428 / KCTC 22496 / NCIMB 10442 / H16 / Stanier 337) (Ralstonia eutropha).